We begin with the raw amino-acid sequence, 94 residues long: Large ribosomal subunit protein uL23 (94 aa).

It belongs to the universal ribosomal protein uL23 family. Part of the 50S ribosomal subunit. Contacts protein L29, and trigger factor when it is bound to the ribosome.

Its function is as follows. One of the early assembly proteins it binds 23S rRNA. One of the proteins that surrounds the polypeptide exit tunnel on the outside of the ribosome. Forms the main docking site for trigger factor binding to the ribosome. In Exiguobacterium sibiricum (strain DSM 17290 / CCUG 55495 / CIP 109462 / JCM 13490 / 255-15), this protein is Large ribosomal subunit protein uL23.